The chain runs to 260 residues: Acetylglutamate kinase (260 aa).

Substrate-binding positions include Gly46 to Gly47, Arg68, and Asn160.

This sequence belongs to the acetylglutamate kinase family. ArgB subfamily.

It localises to the cytoplasm. It carries out the reaction N-acetyl-L-glutamate + ATP = N-acetyl-L-glutamyl 5-phosphate + ADP. The protein operates within amino-acid biosynthesis; L-arginine biosynthesis; N(2)-acetyl-L-ornithine from L-glutamate: step 2/4. In terms of biological role, catalyzes the ATP-dependent phosphorylation of N-acetyl-L-glutamate. The protein is Acetylglutamate kinase of Shewanella sp. (strain ANA-3).